Consider the following 720-residue polypeptide: Nucleoporin NUP2 (720 aa).

Residues 1-33 are disordered; that stretch reads MAKRVADAQIQRETYDSNESDDDVTPSTKVASS. Residues serine 17 and serine 20 each carry the phosphoserine modification. The segment at 35–50 is interaction with SRP1 NLS binding site 1; the sequence is VMNRRKIAMPKRRMAF. Disordered stretches follow at residues 52-92 and 136-278; these read PFGS…SNSR and KSIE…VDNN. The FXF 1 repeat unit spans residues 67 to 69; the sequence is FSF. Over residues 81–92 the composition is skewed to polar residues; that stretch reads VDNSPTTESNSR. Serine 137 is subject to Phosphoserine. Basic and acidic residues predominate over residues 147–159; sequence NDAKPAKVEDVQK. Serine 165 carries the post-translational modification Phosphoserine. Residues 189–192 form an FXFG 1 repeat; the sequence is FSFG. A compositionally biased stretch (basic and acidic residues) spans 193-202; it reads PKKENRKKDE. A phosphoserine mark is found at serine 203 and serine 205. FXF repeat units follow at residues 216–218 and 247–249; these read FKF and FSF. Positions 243–278 are enriched in polar residues; sequence NAKPFSFSSATSTTEQTKSKNPLSLTEATKTNVDNN. FXFG repeat units follow at residues 285 to 288, 302 to 305, and 318 to 321; these read FTFG and FVFG. The span at 315 to 324 shows a compositional bias: polar residues; sequence KSSFTFGSTT. The interval 315 to 604 is disordered; it reads KSSFTFGSTT…KPINLQNGEE (290 aa). Low complexity predominate over residues 345–360; the sequence is SNDSNPSFSFSIPSKN. A phosphoserine mark is found at serine 348 and serine 351. One copy of the FXF 4 repeat lies at 352–354; it reads FSF. Phosphothreonine is present on threonine 361. An FXFG 5 repeat occupies 369–372; the sequence is FSFG. The segment covering 373 to 384 has biased composition (polar residues); sequence VPNSSKNETSKP. An FXFG 6 repeat occupies 386–389; the sequence is FSFG. The segment covering 424-435 has biased composition (basic and acidic residues); that stretch reads TEKEKESKKDSK. FXFG repeat units lie at residues 438-441, 474-477, 493-496, 511-514, and 524-527; these read FSFG and FTFG. Positions 479–495 are enriched in low complexity; it reads NTNTTKTADTKAPTFTF. Over residues 513–533 the composition is skewed to polar residues; that stretch reads FGTSQPNNTPSFSFGKTTANL. Positions 534–548 are enriched in low complexity; the sequence is PANSSTSPAPSIPST. An FXF 5 repeat occupies 550–552; it reads FKF. Residues 574–584 show a composition bias toward polar residues; the sequence is TEATGNESQDA. Serine 581 bears the Phosphoserine mark. The 138-residue stretch at 583 to 720 folds into the RanBD1 domain; the sequence is DATKVDATPE…AIEDAKKEMK (138 aa). Threonine 590 is subject to Phosphothreonine.

Component of the nuclear pore complex (NPC). NPC constitutes the exclusive means of nucleocytoplasmic transport. NPCs allow the passive diffusion of ions and small molecules and the active, nuclear transport receptor-mediated bidirectional transport of macromolecules such as proteins, RNAs, ribonucleoparticles (RNPs), and ribosomal subunits across the nuclear envelope. Due to its 8-fold rotational symmetry, all subunits are present with 8 copies or multiples thereof. Binds to the nuclear basket of the NPC through NUP60 in a (GSP1, GSP2) GTPase-GTP-dependent manner. Interacts through its FG repeats with nuclear transport factors. Interacts with KAP122.

The protein localises to the nucleus. The protein resides in the nuclear pore complex. It is found in the nucleus membrane. Its function is as follows. Functions as a component of the nuclear pore complex (NPC). NPC components, collectively referred to as nucleoporins (NUPs), can play the role of both NPC structural components and of docking or interaction partners for transiently associated nuclear transport factors. Active directional transport is assured by both, a Phe-Gly (FG) repeat affinity gradient for these transport factors across the NPC and a transport cofactor concentration gradient across the nuclear envelope (GSP1 and GSP2 GTPases associated predominantly with GTP in the nucleus, with GDP in the cytoplasm). As one of the FG repeat nucleoporins NUP2 is involved in interactions with and guidance of nuclear transport receptors such as SRP1-KAP95 (importin alpha and beta) through the NPC. Like the closely related NUP1 it also plays an important role in disassembling and recycling SRP1-KAP95 to the cytoplasm after nuclear import. Upon entry of the heterotrimeric SRP1-KAP95-cargo complex in the nucleus, NUP2 binds through its N-terminus to the SRP1 nuclear localization signal (NLS) binding site, thus accelerating the release of the NLS-cargo. SRP1 in turn is released from NUP2 by binding of the GSP1-GTP associated export factor CSE1. NUP2 may also have a chromatin boundary/insulator activity through indirect interaction with genomic DNA via CSE1 and blocking of heterochromatin spreading. The protein is Nucleoporin NUP2 (NUP2) of Saccharomyces cerevisiae (strain ATCC 204508 / S288c) (Baker's yeast).